The sequence spans 59 residues: Large ribosomal subunit protein bL32 (59 aa).

Basic residues predominate over residues 1-16 (MAVPKRKVSPHRRGNR). Positions 1–20 (MAVPKRKVSPHRRGNRRAHD) are disordered.

It belongs to the bacterial ribosomal protein bL32 family.

The chain is Large ribosomal subunit protein bL32 from Erythrobacter litoralis (strain HTCC2594).